The sequence spans 195 residues: Imidazoleglycerol-phosphate dehydratase (195 aa).

It belongs to the imidazoleglycerol-phosphate dehydratase family.

It localises to the cytoplasm. The enzyme catalyses D-erythro-1-(imidazol-4-yl)glycerol 3-phosphate = 3-(imidazol-4-yl)-2-oxopropyl phosphate + H2O. It functions in the pathway amino-acid biosynthesis; L-histidine biosynthesis; L-histidine from 5-phospho-alpha-D-ribose 1-diphosphate: step 6/9. This Frankia casuarinae (strain DSM 45818 / CECT 9043 / HFP020203 / CcI3) protein is Imidazoleglycerol-phosphate dehydratase.